The primary structure comprises 418 residues: Intracellular coagulation inhibitor 1 (418 aa).

Residues 1-24 (MKLGDWKFCLLLFQLMFLTNVCLS) form the signal peptide. N-linked (GlcNAc...) asparagine glycans are attached at residues Asn-49 and Asn-404.

Belongs to the serpin family. In terms of assembly, monomer. Forms a covalent heterodimer with clotting factor C. Interacts with big defensin. N-glycosylated. As to expression, expressed in hemocytes (at protein level).

It is found in the secreted. In terms of biological role, serine protease inhibitor that specifically inhibits clotting factor C. Does not inhibit clotting factor B or proclotting enzyme. This Tachypleus tridentatus (Japanese horseshoe crab) protein is Intracellular coagulation inhibitor 1.